The primary structure comprises 102 residues: Probable endoribonuclease MazF2 (102 aa).

Belongs to the PemK/MazF family. In terms of assembly, forms a complex with cognate antitoxin MazE2.

In terms of biological role, toxic component of a type II toxin-antitoxin (TA) system. Acts as an endoribonuclease. Neutralized by coexpression with cognate antitoxin MazE2. In Mycobacterium tuberculosis (strain CDC 1551 / Oshkosh), this protein is Probable endoribonuclease MazF2 (mazF2).